The primary structure comprises 198 residues: 3-isopropylmalate dehydratase small subunit (198 aa).

Belongs to the LeuD family. LeuD type 1 subfamily. As to quaternary structure, heterodimer of LeuC and LeuD.

It catalyses the reaction (2R,3S)-3-isopropylmalate = (2S)-2-isopropylmalate. It participates in amino-acid biosynthesis; L-leucine biosynthesis; L-leucine from 3-methyl-2-oxobutanoate: step 2/4. Functionally, catalyzes the isomerization between 2-isopropylmalate and 3-isopropylmalate, via the formation of 2-isopropylmaleate. In Corynebacterium jeikeium (strain K411), this protein is 3-isopropylmalate dehydratase small subunit.